Consider the following 144-residue polypeptide: Large ribosomal subunit protein uL11 (144 aa).

Belongs to the universal ribosomal protein uL11 family. Part of the ribosomal stalk of the 50S ribosomal subunit. Interacts with L10 and the large rRNA to form the base of the stalk. L10 forms an elongated spine to which L12 dimers bind in a sequential fashion forming a multimeric L10(L12)X complex. Post-translationally, one or more lysine residues are methylated.

Functionally, forms part of the ribosomal stalk which helps the ribosome interact with GTP-bound translation factors. This Parafrankia sp. (strain EAN1pec) protein is Large ribosomal subunit protein uL11.